A 446-amino-acid polypeptide reads, in one-letter code: Probable glycine dehydrogenase (decarboxylating) subunit 1 (446 aa).

It belongs to the GcvP family. N-terminal subunit subfamily. As to quaternary structure, the glycine cleavage system is composed of four proteins: P, T, L and H. In this organism, the P 'protein' is a heterodimer of two subunits.

The enzyme catalyses N(6)-[(R)-lipoyl]-L-lysyl-[glycine-cleavage complex H protein] + glycine + H(+) = N(6)-[(R)-S(8)-aminomethyldihydrolipoyl]-L-lysyl-[glycine-cleavage complex H protein] + CO2. In terms of biological role, the glycine cleavage system catalyzes the degradation of glycine. The P protein binds the alpha-amino group of glycine through its pyridoxal phosphate cofactor; CO(2) is released and the remaining methylamine moiety is then transferred to the lipoamide cofactor of the H protein. This is Probable glycine dehydrogenase (decarboxylating) subunit 1 from Thermococcus onnurineus (strain NA1).